The following is a 39-amino-acid chain: Cytochrome b559 subunit beta (39 aa).

The helical transmembrane segment at 14–30 (WLAVHGLAIPTVFFLGS) threads the bilayer. H18 is a heme binding site.

The protein belongs to the PsbE/PsbF family. In terms of assembly, heterodimer of an alpha subunit and a beta subunit. PSII is composed of 1 copy each of membrane proteins PsbA, PsbB, PsbC, PsbD, PsbE, PsbF, PsbH, PsbI, PsbJ, PsbK, PsbL, PsbM, PsbT, PsbX, PsbY, PsbZ, Psb30/Ycf12, at least 3 peripheral proteins of the oxygen-evolving complex and a large number of cofactors. It forms dimeric complexes. The cofactor is heme b.

It is found in the plastid membrane. Functionally, this b-type cytochrome is tightly associated with the reaction center of photosystem II (PSII). PSII is a light-driven water:plastoquinone oxidoreductase that uses light energy to abstract electrons from H(2)O, generating O(2) and a proton gradient subsequently used for ATP formation. It consists of a core antenna complex that captures photons, and an electron transfer chain that converts photonic excitation into a charge separation. The protein is Cytochrome b559 subunit beta of Cuscuta gronovii (Common dodder).